A 334-amino-acid polypeptide reads, in one-letter code: Formylmethanofuran--tetrahydromethanopterin formyltransferase (334 aa).

The protein belongs to the FTR family. As to quaternary structure, homotetramer.

The protein localises to the cytoplasm. The enzyme catalyses N-formylmethanofuran + 5,6,7,8-tetrahydromethanopterin + H(+) = N(5)-formyl-5,6,7,8-tetrahydromethanopterin + methanofuran. The protein operates within one-carbon metabolism; formaldehyde degradation; formate from formaldehyde (H(4)MPT route): step 4/5. Catalyzes the transfer of a formyl group from 5-formyl tetrahydromethanopterin (5-formyl-H(4)MPT) to methanofuran (MFR) to produce formylmethanofuran (formyl-MFR) and tetrahydromethanopterin (H(4)MPT). The protein is Formylmethanofuran--tetrahydromethanopterin formyltransferase of Rhodopirellula baltica (strain DSM 10527 / NCIMB 13988 / SH1).